The following is a 101-amino-acid chain: NAD(P)H-quinone oxidoreductase subunit 4L, chloroplastic (101 aa).

3 helical membrane passes run 2 to 22 (ILEHVLVLSAYLFLIGLYGLI), 32 to 52 (MCLELILNAVNMNFVTFSDFF), and 61 to 81 (IFCIFVIAIAAAEAAIGLAIV).

It belongs to the complex I subunit 4L family. In terms of assembly, NDH is composed of at least 16 different subunits, 5 of which are encoded in the nucleus.

The protein localises to the plastid. It is found in the chloroplast thylakoid membrane. It catalyses the reaction a plastoquinone + NADH + (n+1) H(+)(in) = a plastoquinol + NAD(+) + n H(+)(out). The catalysed reaction is a plastoquinone + NADPH + (n+1) H(+)(in) = a plastoquinol + NADP(+) + n H(+)(out). In terms of biological role, NDH shuttles electrons from NAD(P)H:plastoquinone, via FMN and iron-sulfur (Fe-S) centers, to quinones in the photosynthetic chain and possibly in a chloroplast respiratory chain. The immediate electron acceptor for the enzyme in this species is believed to be plastoquinone. Couples the redox reaction to proton translocation, and thus conserves the redox energy in a proton gradient. The sequence is that of NAD(P)H-quinone oxidoreductase subunit 4L, chloroplastic from Crucihimalaya wallichii (Rock-cress).